Reading from the N-terminus, the 163-residue chain is Cyclic pyranopterin monophosphate synthase (163 aa).

Residues 75-77 and 113-114 each bind substrate; these read LCH and ME. D128 is an active-site residue.

The protein belongs to the MoaC family. Homohexamer; trimer of dimers.

It carries out the reaction (8S)-3',8-cyclo-7,8-dihydroguanosine 5'-triphosphate = cyclic pyranopterin phosphate + diphosphate. Its pathway is cofactor biosynthesis; molybdopterin biosynthesis. Functionally, catalyzes the conversion of (8S)-3',8-cyclo-7,8-dihydroguanosine 5'-triphosphate to cyclic pyranopterin monophosphate (cPMP). This is Cyclic pyranopterin monophosphate synthase from Jannaschia sp. (strain CCS1).